The primary structure comprises 1682 residues: Sodium channel protein type 7 subunit alpha (1682 aa).

Topologically, residues 1–117 (MLASPEPKGL…RRTTIKVLVH (117 aa)) are cytoplasmic. The I repeat unit spans residues 100–401 (TLSPFNCIRR…ILAMAYEEEK (302 aa)). The chain crosses the membrane as a helical span at residues 118–137 (PFFQLFILISVLIDCVFMSL). Residues 138-141 (TNLP) are Extracellular-facing. A helical transmembrane segment spans residues 142 to 167 (KWRPVLENTLLGIYTFEILVKLFARG). Topologically, residues 168–178 (VWAGSFSFLGD) are cytoplasmic. A helical transmembrane segment spans residues 179–196 (PWNWLDFSVTVFEVIIRY). At 197–200 (SPLD) the chain is on the extracellular side. The helical transmembrane segment at 201–219 (FIPTLQTARTLRILKIIPL) threads the bilayer. Residues 220–237 (NQGLKSLVGVLIHCLKQL) lie on the Cytoplasmic side of the membrane. Residues 238–259 (IGVIILTLFFLSIFSLIGMGLF) form a helical membrane-spanning segment. At 260–338 (MGNLKHKCFR…PDQGFTNFDS (79 aa)) the chain is on the extracellular side. Cysteines 267 and 307 form a disulfide. N-linked (GlcNAc...) asparagine glycans are attached at residues Asn-276, Asn-281, and Asn-309. The pore-forming intramembrane region spans 339–366 (FGWALFALFRLMAQDYPEVLYHQILYAS). Gly-367 is a topological domain (extracellular). The helical transmembrane segment at 368-407 (KVYMIFFVVVSFLFSFYMASLFLGILAMAYEEEKQRVGEI) threads the bilayer. At 408-505 (SKKIEPKFQQ…EFVHRIIMAP (98 aa)) the chain is on the cytoplasmic side. At Ser-442 the chain carries Phosphoserine; by PKA. The II repeat unit spans residues 487 to 758 (CSPCWLKLKE…QLAVARIKKG (272 aa)). Residues 506–521 (FTDLFLIICIILNVCF) form a helical membrane-spanning segment. Residues 522-530 (LTLEHYPMS) lie on the Extracellular side of the membrane. A helical membrane pass occupies residues 531 to 559 (KQTNTLLNIGNLVFIGIFTAEMIFKIIAM). Over 560–568 (HPYGYFQVG) the chain is Cytoplasmic. A helical membrane pass occupies residues 569–586 (WNIFDSMIVFHGLIELCL). At 587–592 (ANVAGM) the chain is on the extracellular side. A helical transmembrane segment spans residues 593 to 609 (ALLRLFRMLRIFKLGKY). Over 610–626 (WPTFQILMWSLSNSWVA) the chain is Cytoplasmic. Residues 627 to 655 (LKDLVLLLFTFIFFSAAFGMKLFGKNYEE) traverse the membrane as a helical segment. Topologically, residues 656-673 (FVCHIDKDCQLPRWHMHD) are extracellular. Intrachain disulfides connect Cys-658–Cys-664 and Cys-696–Cys-705. An intramembrane region (pore-forming) is located at residues 674-700 (FFHSFLNVFRILCGEWVETLWDCMEVA). Residue Gly-701 is a topological domain, extracellular. The helical transmembrane segment at 702-732 (QSWCIPFYLMVILIGNLLVLYLFLALVSSFS) threads the bilayer. Residues 733-934 (SCKDVTAEEN…KTCCKIVENN (202 aa)) are Cytoplasmic-facing. Phosphothreonine; by PKA is present on Thr-777. The disordered stretch occupies residues 801–871 (TQDFLKDKEK…SKEKIKQSSS (71 aa)). A compositionally biased stretch (basic and acidic residues) spans 804–819 (FLKDKEKSSGTEKNAT). The segment covering 820-834 (ENESQSLIPSPSVSE) has biased composition (polar residues). Ser-843 carries the post-translational modification Phosphoserine. Residues Ser-869 and Ser-905 each carry the phosphoserine; by PKA modification. An III repeat occupies 916-1224 (KGKIWQNIRK…RKQYRRLKKL (309 aa)). A helical transmembrane segment spans residues 935–953 (WFKCFIGLVTLLSTGTLAF). Topologically, residues 954 to 961 (EDIYMDQR) are extracellular. A helical membrane pass occupies residues 962–990 (KTIKILLEYADMIFTYIFILEMLLKWMAY). Topologically, residues 991 to 998 (GFKAYFSN) are cytoplasmic. The helical transmembrane segment at 999–1020 (GWYRLDFVVVIVFCLSLIGKTR) threads the bilayer. Glu-1021 is a topological domain (extracellular). The chain crosses the membrane as a helical span at residues 1022 to 1040 (ELKPLISMKFLRPLRVLSQ). Over 1041 to 1055 (FERMKVVVRALIKTT) the chain is Cytoplasmic. The helical transmembrane segment at 1056–1080 (LPTLNVFLVCLMIWLIFSIMGVDLF) threads the bilayer. Over 1081 to 1127 (AGRFYECIDPTSGERFPSSEVMNKSRCESLLFNESMLWENAKMNFDN) the chain is Extracellular. Cys-1087 and Cys-1107 are oxidised to a cystine. N-linked (GlcNAc...) asparagine glycosylation is found at Asn-1103 and Asn-1113. Positions 1128 to 1154 (VGNGFLSLLQVATFNGWITIMNSAIDS) form an intramembrane region, pore-forming. The Extracellular segment spans residues 1155-1167 (VAVNIQPHFEVNI). A helical membrane pass occupies residues 1168–1202 (YMYCYFINFIIFGVFLPLSMLITVIIDNFNKHKIK). Residues 1203 to 1250 (LGGSNIFITVKQRKQYRRLKKLMYEDSQRPVPRPLNKLQGFIFDVVTS) are Cytoplasmic-facing. The IV repeat unit spans residues 1233 to 1531 (VPRPLNKLQG…WKRFDPDRTQ (299 aa)). Residues 1251-1272 (QAFNVIVMVLICFQAIAMMIDT) form a helical membrane-spanning segment. The Extracellular portion of the chain corresponds to 1273–1276 (DVQS). Residues 1277-1305 (LQMSIALYWINSIFVMLYTMECILKLIAF) traverse the membrane as a helical segment. At 1306 to 1312 (RCFYFTI) the chain is on the cytoplasmic side. A helical transmembrane segment spans residues 1313–1338 (AWNIFDFMVVIFSITGLCLPMTVGSY). Residues 1339-1341 (LVP) lie on the Extracellular side of the membrane. The helical transmembrane segment at 1342-1362 (PSLVQLILLSRIIHMLRLGKG) threads the bilayer. At 1363 to 1377 (PKVFHNLMLPLMLSL) the chain is on the cytoplasmic side. The chain crosses the membrane as a helical span at residues 1378–1402 (PALLNIILLIFLVMFIYAVFGMYNF). At 1403–1420 (AYVKKEAGINDVSNFETF) the chain is on the extracellular side. The pore-forming intramembrane region spans 1421 to 1444 (GNSMLCLFQVAIFAGWDGMLDAIF). Over 1445–1468 (NSKWSDCDPDKINPGTQVRGDCGN) the chain is Extracellular. A disulfide bridge links Cys-1451 with Cys-1466. Residues 1469 to 1504 (PSVGIFYFVSYILISWLIIVNMYIVVVMEFLNIASK) form a helical membrane-spanning segment. At 1505-1682 (KKNKTLSEDD…KEKSPIQSQI (178 aa)) the chain is on the cytoplasmic side.

This sequence belongs to the sodium channel (TC 1.A.1.10) family. SCN7A subfamily. As to quaternary structure, the sodium channel formed by SCN7A is probably a heterooligomeric complex consisting of the ion conducting pore forming alpha subunit SCN7A and regulatory beta subunits such as SCN3B. Interacts with ATP1A1; activates ATP1A1 and thereby indirectly signals to nearby neurons to regulate sodium homeostasis. As to expression, heart and uterus.

It is found in the cell membrane. The enzyme catalyses Na(+)(in) = Na(+)(out). Its function is as follows. Sodium leak channel functioning as an osmosensor regulating sodium ion levels in various tissues and organs. While most sodium channels are voltage-gated, SCN7A is not and lets sodium flow through membrane along its concentration gradient. In glial cells of the central nervous system, senses body-fluid sodium levels and controls salt intake behavior as well as voluntary water intake through activation of nearby neurons to maintain appropriate sodium levels in the body. By mediating sodium influx into keratinocytes, also plays a role in skin barrier homeostasis. The sequence is that of Sodium channel protein type 7 subunit alpha from Homo sapiens (Human).